Reading from the N-terminus, the 2149-residue chain is Polyketide synthase 1 (2149 aa).

The segment at 19 to 261 is N-terminal acylcarrier protein transacylase domain (SAT); it reads FIFGDQSSCN…TRLAVHAPYH (243 aa). The Ketosynthase family 3 (KS3) domain maps to 394 to 829; it reads ESKIAIIGMS…GGNTALLVED (436 aa). Catalysis depends on for beta-ketoacyl synthase activity residues C566, H701, and H745. The interval 929-1233 is malonyl-CoA:ACP transacylase (MAT) domain; it reads AFVFSGQGSQ…PSLMRNKDGW (305 aa). Catalysis depends on S1018, which acts as the For acyl/malonyl transferase activity. The interval 1310–1624 is product template (PT) domain; that stretch reads TASVHRIVHE…RKVLNTAMPP (315 aa). An N-terminal hotdog fold region spans residues 1314–1447; that stretch reads HRIVHESVDK…SSLHFERPKV (134 aa). The PKS/mFAS DH domain occupies 1314-1619; sequence HRIVHESVDK…FQGIPRKVLN (306 aa). The active-site Proton acceptor; for dehydratase activity is H1346. The segment at 1474 to 1619 is C-terminal hotdog fold; that stretch reads LNSRMSSGVI…FQGIPRKVLN (146 aa). D1533 (proton donor; for dehydratase activity) is an active-site residue. The segment at 1619–1657 is disordered; that stretch reads NTAMPPPKSQNEAPVRSAPAKPAAKPPKSASSEHSGHFA. The span at 1635–1650 shows a compositional bias: low complexity; it reads SAPAKPAAKPPKSASS. One can recognise a Carrier 1 domain in the interval 1678 to 1752; sequence RNPMLAVFKI…DLATHLGLDT (75 aa). S1712 carries the O-(pantetheine 4'-phosphoryl)serine modification. Residues 1755–1790 are compositionally biased toward low complexity; the sequence is SDQSSGQSSSSGGLSPRSDSIGEITSSATTPPSLSP. The interval 1755–1796 is disordered; the sequence is SDQSSGQSSSSGGLSPRSDSIGEITSSATTPPSLSPRGSVSG. The Carrier 2 domain maps to 1793–1870; sequence SVSGSQCKDV…SFKHMFQQGH (78 aa). S1830 is subject to O-(pantetheine 4'-phosphoryl)serine. The tract at residues 1882 to 2147 is thioesterase (TE) domain; the sequence is LKQYRATSTL…ERVAAFIRST (266 aa). Catalysis depends on S1973, which acts as the For thioesterase activity.

Functionally, polyketide synthase; part of the Pks1 gene cluster that mediates the biosynthesis of an anthraquinone derivative pigment that contributes to conidial pigmentation that provides protection from UV radiation, heat and cold stress. The polyketide synthase Pks1 produces 1-acetyl-2,4,6,8-tetrahydroxy-9,10-anthraquinone though condensation of acetyl-CoA with malonyl-CoA. The dehydratase EthD and the laccase Mlac1 further convert the anthraquinone derivative into the final conidial pigment. The protein is Polyketide synthase 1 of Metarhizium majus (strain ARSEF 297).